The sequence spans 242 residues: Nuclear autoantigen Sp-100 (242 aa).

In terms of domain architecture, SAND spans 1–50 (KKCIQSEDKKWFTPREFEIEGDRRASKNWKLSIRCGGYTLKFLMENKLLP). DNA-binding regions (HMG box) lie at residues 51-127 (EPPS…KTYI) and 143-211 (PKRP…AADR). The Nuclear localization signal motif lies at 91 to 108 (KKCSEMWKTIFAKEKGKF). The tract at residues 205–242 (KDIAADRAKGKPNSAKKRVVKAEKSKKKKEEEEDEVDE) is disordered. The span at 218–231 (SAKKRVVKAEKSKK) shows a compositional bias: basic residues.

In terms of assembly, homodimer. Interacts with members of the HP1 family of nonhistone chromosomal protein, such as CBX5 and CBX3 via the PxVxL motif. Interacts with ETS1; the interaction is direct and modulates ETS1 transcriptional activity. Interacts with the MRN complex which is composed of two heterodimers RAD50/MRE11 associated with a single NBN; recruits the complex to PML-related bodies. Interacts with HIPK2; positively regulates TP53-dependent transcription. Interacts with CASP8AP2; may negatively regulate CASP8AP2 export from the nucleus to the cytoplasm. Post-translationally, sumoylated. Sumoylated with SUMO1. Sumoylation depends on a functional nuclear localization signal but is not necessary for nuclear import or nuclear body targeting. Sumoylation may stabilize the interaction with CBX5. Phosphorylated.

Its subcellular location is the nucleus. It localises to the PML body. The protein localises to the nuclear body. It is found in the cytoplasm. Functionally, together with PML, this tumor suppressor is a major constituent of the PML bodies, a subnuclear organelle involved in a large number of physiological processes including cell growth, differentiation and apoptosis. Functions as a transcriptional coactivator of ETS1 and ETS2. Under certain conditions, it may also act as a corepressor of ETS1 preventing its binding to DNA. Through the regulation of ETS1 it may play a role in angiogenesis, controlling endothelial cell motility and invasion. Through interaction with the MRN complex it may be involved in the regulation of telomeres lengthening. May also regulate TP53-mediated transcription and through CASP8AP2, regulate FAS-mediated apoptosis. May also play a role in infection by viruses through mechanisms that may involve chromatin and/or transcriptional regulation. This is Nuclear autoantigen Sp-100 (SP100) from Hylobates lar (Lar gibbon).